We begin with the raw amino-acid sequence, 245 residues long: tRNA pseudouridine synthase A (245 aa).

Residue aspartate 52 is the Nucleophile of the active site. Residue tyrosine 111 coordinates substrate.

This sequence belongs to the tRNA pseudouridine synthase TruA family. In terms of assembly, homodimer.

It carries out the reaction uridine(38/39/40) in tRNA = pseudouridine(38/39/40) in tRNA. Its function is as follows. Formation of pseudouridine at positions 38, 39 and 40 in the anticodon stem and loop of transfer RNAs. This chain is tRNA pseudouridine synthase A, found in Rickettsia typhi (strain ATCC VR-144 / Wilmington).